We begin with the raw amino-acid sequence, 502 residues long: Probable cytosol aminopeptidase (502 aa).

Residues Lys-270 and Asp-275 each coordinate Mn(2+). The active site involves Lys-282. The Mn(2+) site is built by Asp-293, Asp-352, and Glu-354. Residue Arg-356 is part of the active site.

It belongs to the peptidase M17 family. Mn(2+) serves as cofactor.

It is found in the cytoplasm. It catalyses the reaction Release of an N-terminal amino acid, Xaa-|-Yaa-, in which Xaa is preferably Leu, but may be other amino acids including Pro although not Arg or Lys, and Yaa may be Pro. Amino acid amides and methyl esters are also readily hydrolyzed, but rates on arylamides are exceedingly low.. The catalysed reaction is Release of an N-terminal amino acid, preferentially leucine, but not glutamic or aspartic acids.. Its function is as follows. Presumably involved in the processing and regular turnover of intracellular proteins. Catalyzes the removal of unsubstituted N-terminal amino acids from various peptides. This Buchnera aphidicola subsp. Schizaphis graminum (strain Sg) protein is Probable cytosol aminopeptidase.